The primary structure comprises 252 residues: Diphthine synthase (252 aa).

Residues Leu-9, Asp-85, Val-88, 113–114, Leu-165, Ala-202, and His-227 each bind S-adenosyl-L-methionine; that span reads SI.

It belongs to the diphthine synthase family. In terms of assembly, homodimer.

The catalysed reaction is 2-[(3S)-amino-3-carboxypropyl]-L-histidyl-[translation elongation factor 2] + 3 S-adenosyl-L-methionine = diphthine-[translation elongation factor 2] + 3 S-adenosyl-L-homocysteine + 3 H(+). The protein operates within protein modification; peptidyl-diphthamide biosynthesis. In terms of biological role, S-adenosyl-L-methionine-dependent methyltransferase that catalyzes the trimethylation of the amino group of the modified target histidine residue in translation elongation factor 2 (EF-2), to form an intermediate called diphthine. The three successive methylation reactions represent the second step of diphthamide biosynthesis. The polypeptide is Diphthine synthase (Methanospirillum hungatei JF-1 (strain ATCC 27890 / DSM 864 / NBRC 100397 / JF-1)).